Reading from the N-terminus, the 293-residue chain is Undecaprenyl-diphosphatase (293 aa).

The next 7 helical transmembrane spans lie at 57–77, 106–126, 134–154, 172–192, 212–232, 239–259, and 268–288; these read PGVS…IVYF, LAIA…KLFW, IRSL…LALA, GFVV…RSGS, FLLG…DAFA, VLPL…AIDW, and STWI…AWWL.

Belongs to the UppP family.

The protein localises to the cell inner membrane. It catalyses the reaction di-trans,octa-cis-undecaprenyl diphosphate + H2O = di-trans,octa-cis-undecaprenyl phosphate + phosphate + H(+). Its function is as follows. Catalyzes the dephosphorylation of undecaprenyl diphosphate (UPP). Confers resistance to bacitracin. This chain is Undecaprenyl-diphosphatase, found in Prochlorococcus marinus (strain MIT 9303).